Consider the following 31-residue polypeptide: Photosystem II reaction center protein T (31 aa).

Residues 3–23 form a helical membrane-spanning segment; that stretch reads SVAYIVVLTMALAVLFFAIAF.

Belongs to the PsbT family. In terms of assembly, PSII is composed of 1 copy each of membrane proteins PsbA, PsbB, PsbC, PsbD, PsbE, PsbF, PsbH, PsbI, PsbJ, PsbK, PsbL, PsbM, PsbT, PsbX, PsbY, PsbZ, Psb30/Ycf12, peripheral proteins PsbO, CyanoQ (PsbQ), PsbU, PsbV and a large number of cofactors. It forms dimeric complexes.

The protein localises to the cellular thylakoid membrane. Functionally, found at the monomer-monomer interface of the photosystem II (PS II) dimer, plays a role in assembly and dimerization of PSII. PSII is a light-driven water plastoquinone oxidoreductase, using light energy to abstract electrons from H(2)O, generating a proton gradient subsequently used for ATP formation. The sequence is that of Photosystem II reaction center protein T from Crocosphaera subtropica (strain ATCC 51142 / BH68) (Cyanothece sp. (strain ATCC 51142)).